A 304-amino-acid polypeptide reads, in one-letter code: Agmatinase (304 aa).

Mn(2+) contacts are provided by H126, D149, H151, D153, D230, and D232.

The protein belongs to the arginase family. Agmatinase subfamily. It depends on Mn(2+) as a cofactor.

It catalyses the reaction agmatine + H2O = urea + putrescine. It functions in the pathway amine and polyamine biosynthesis; putrescine biosynthesis via agmatine pathway; putrescine from agmatine: step 1/1. Functionally, catalyzes the formation of putrescine from agmatine. The protein is Agmatinase of Edwardsiella ictaluri (strain 93-146).